Reading from the N-terminus, the 336-residue chain is C4-dicarboxylate-binding periplasmic protein DctP (336 aa).

Positions 1 to 31 are cleaved as a signal peptide; sequence MTRLNTCTFIKQIVKMTSIAALLGASLNSWA. K48, K101, R176, N216, N220, and Y243 together coordinate (S)-malate. Residues K48, K101, R176, N216, N220, and Y243 each coordinate succinate.

The protein belongs to the bacterial solute-binding protein 7 family. In terms of assembly, the complex comprises the extracytoplasmic solute receptor protein DctP, and the two transmembrane proteins DctQ and DctM.

It localises to the periplasm. In terms of biological role, part of the tripartite ATP-independent periplasmic (TRAP) transport system DctPQM involved in C4-dicarboxylates uptake. Required for the utilization of succinate, fumarate, L-malate and alpha-ketoglutarate. Binds succinate and malate. The sequence is that of C4-dicarboxylate-binding periplasmic protein DctP from Shewanella loihica (strain ATCC BAA-1088 / PV-4).